The following is a 90-amino-acid chain: Small ribosomal subunit protein uS15c (90 aa).

The protein belongs to the universal ribosomal protein uS15 family. In terms of assembly, part of the 30S ribosomal subunit.

The protein resides in the plastid. It is found in the chloroplast. In Mesostigma viride (Green alga), this protein is Small ribosomal subunit protein uS15c (rps15).